The sequence spans 329 residues: Malate dehydrogenase (329 aa).

12–18 (GAAGQIG) contacts NAD(+). 2 residues coordinate substrate: arginine 95 and arginine 101. NAD(+) is bound by residues asparagine 108, glutamine 115, and 132–134 (VGN). Substrate is bound by residues asparagine 134 and arginine 165. Histidine 190 functions as the Proton acceptor in the catalytic mechanism.

This sequence belongs to the LDH/MDH superfamily. MDH type 2 family. As to quaternary structure, homodimer.

It carries out the reaction (S)-malate + NAD(+) = oxaloacetate + NADH + H(+). With respect to regulation, substrate inhibition is observed at high concentrations of oxaloacetate. In terms of biological role, catalyzes the reversible oxidation of malate to oxaloacetate. Catalyzes the reduction of oxaloacetate more efficiently than the oxidation of malate. The sequence is that of Malate dehydrogenase from Syntrophobacter fumaroxidans (strain DSM 10017 / MPOB).